Here is a 198-residue protein sequence, read N- to C-terminus: MSDAWLVVGLGNPGAEYERTRHNVGQMVLDELASRTRGSFKRHRTGARTAEVRLGVAPGGAPGPRVVLAAPTSYMNVSGGPVAGLAKYFDVDVEHLVVVHDELDVPFGSVRLKRGGGEGGHNGLRSISKSLGDKDYARVRVGIGRPPGRQDPADFVLKEFSSTEKKDMPFLVMDAADAVEELVIKGFEAAQQKFHAPA.

Tyrosine 17 is a tRNA binding site. Histidine 22 serves as the catalytic Proton acceptor. TRNA-binding residues include tyrosine 74, asparagine 76, and asparagine 122.

The protein belongs to the PTH family. Monomer.

It is found in the cytoplasm. It carries out the reaction an N-acyl-L-alpha-aminoacyl-tRNA + H2O = an N-acyl-L-amino acid + a tRNA + H(+). Its function is as follows. Hydrolyzes ribosome-free peptidyl-tRNAs (with 1 or more amino acids incorporated), which drop off the ribosome during protein synthesis, or as a result of ribosome stalling. In terms of biological role, catalyzes the release of premature peptidyl moieties from peptidyl-tRNA molecules trapped in stalled 50S ribosomal subunits, and thus maintains levels of free tRNAs and 50S ribosomes. The sequence is that of Peptidyl-tRNA hydrolase from Kineococcus radiotolerans (strain ATCC BAA-149 / DSM 14245 / SRS30216).